Reading from the N-terminus, the 215-residue chain is N-(5'-phosphoribosyl)anthranilate isomerase (215 aa).

It belongs to the TrpF family.

It carries out the reaction N-(5-phospho-beta-D-ribosyl)anthranilate = 1-(2-carboxyphenylamino)-1-deoxy-D-ribulose 5-phosphate. Its pathway is amino-acid biosynthesis; L-tryptophan biosynthesis; L-tryptophan from chorismate: step 3/5. This is N-(5'-phosphoribosyl)anthranilate isomerase from Rippkaea orientalis (strain PCC 8801 / RF-1) (Cyanothece sp. (strain PCC 8801)).